Here is a 184-residue protein sequence, read N- to C-terminus: UPF0215 protein MJ1150 (184 aa).

Belongs to the UPF0215 family.

The sequence is that of UPF0215 protein MJ1150 from Methanocaldococcus jannaschii (strain ATCC 43067 / DSM 2661 / JAL-1 / JCM 10045 / NBRC 100440) (Methanococcus jannaschii).